A 295-amino-acid polypeptide reads, in one-letter code: Glycine--tRNA ligase alpha subunit (295 aa).

The protein belongs to the class-II aminoacyl-tRNA synthetase family. In terms of assembly, tetramer of two alpha and two beta subunits.

Its subcellular location is the cytoplasm. The catalysed reaction is tRNA(Gly) + glycine + ATP = glycyl-tRNA(Gly) + AMP + diphosphate. The polypeptide is Glycine--tRNA ligase alpha subunit (Shouchella clausii (strain KSM-K16) (Alkalihalobacillus clausii)).